Here is a 163-residue protein sequence, read N- to C-terminus: Transmembrane protein 278 (163 aa).

The tract at residues 1-37 (MSEQGRETEEEEGGGGASDTAPMLPRGPPDHQASALT) is disordered. 2 helical membrane-spanning segments follow: residues 51–71 (LLAG…LVLL) and 105–125 (AALI…ASAV). Residues 136-148 (LLPPPAGTPGPRR) are compositionally biased toward pro residues. The tract at residues 136 to 156 (LLPPPAGTPGPRRPPGRPDED) is disordered.

This sequence belongs to the TMEM88 family.

Its subcellular location is the membrane. The chain is Transmembrane protein 278 from Homo sapiens (Human).